The sequence spans 722 residues: Transcription factor kayak, isoforms D/sro (722 aa).

Over residues 173–188 (QHQTQQQHQSQQQQQH) the composition is skewed to low complexity. 3 disordered regions span residues 173–193 (QHQTQQQHQSQQQQQHQRQDY), 283–317 (LGQGSESEDSNASYNDTQMNEEQDTTDTSSAHTDS), and 350–407 (GSAS…KRRV). The segment covering 283 to 300 (LGQGSESEDSNASYNDTQ) has biased composition (polar residues). Low complexity-rich tracts occupy residues 308–317 (TDTSSAHTDS) and 350–364 (GSASVGSSNANTSNT). A bZIP domain is found at 385-448 (EQKRAVRRER…NQLEYLLATH (64 aa)). A basic motif region spans residues 387 to 406 (KRAVRRERNKQAAARCRKRR). A leucine-zipper region spans residues 413–420 (LTEEVEQL). Residues 477-498 (AGSSGSGASSHHNHNSNDSSNG) show a composition bias toward low complexity. Disordered stretches follow at residues 477 to 519 (AGSS…PLDL) and 683 to 722 (DGGTGLTPVSGPLVPNSSSTNKHPLELPTPTAEPSKLVSL). Polar residues predominate over residues 506 to 516 (TLNSTGRSNSP). A Phosphoserine modification is found at S515.

This sequence belongs to the bZIP family. Fos subfamily. Homodimer. Heterodimer with Jra. The kay-Jra heterodimer binds more stably to the AP-1 site than either of the two proteins alone.

It localises to the nucleus. Developmentally regulated transcription factor AP-1 binds and recognizes the enhancer DNA sequence: 5'-TGA[CG]TCA-3'. May play a role in the function or determination of a particular subset of cells in the developing embryo. It is able to carry out its function either independently of or in conjunction with Jra. This Drosophila melanogaster (Fruit fly) protein is Transcription factor kayak, isoforms D/sro.